Here is a 3526-residue protein sequence, read N- to C-terminus: WD repeat and FYVE domain-containing protein 3 (3526 aa).

Serine 1942 and serine 2278 each carry phosphoserine. The segment at 2285 to 2981 (LTGSRRNRKE…PHPPKRVRSR (697 aa)) is sufficient for localization to p62 bodies/ALIS. 2 disordered regions span residues 2403–2429 (ETNV…PARY) and 2459–2522 (SSEG…EKTD). Basic and acidic residues predominate over residues 2468–2477 (EPEHGEDTIA). Phosphoserine is present on serine 2492. The BEACH-type PH domain occupies 2531–2656 (EEGEKIQHMY…IRNKVYQRFL (126 aa)). The tract at residues 2586-3526 (MHEPIIPRGA…RGSEDGPRNC (941 aa)) is interaction with SQSTM1. The BEACH domain maps to 2683–2976 (GLLSTLVGEK…QLFKKPHPPK (294 aa)). The tract at residues 2981–3526 (RLNGDNAGIS…RGSEDGPRNC (546 aa)) is interaction with ATG5. 4 WD repeats span residues 3077–3115 (SEWG…EKAK), 3125–3164 (GHTD…FLTQ), 3167–3206 (GHRA…VSVN), and 3210–3254 (GRSQ…VPET). The segment at 3272–3335 (AQIGQEAQDE…SGSDDSRRWS (64 aa)) is disordered. The span at 3278-3290 (AQDEDSSDSEADE) shows a compositional bias: acidic residues. The interval 3313–3363 (AASCRATAAWCTDSGSDDSRRWSDQLSLDEKDGFIFVNYSEGQTRAHLQGP) is interaction with GABARAP. Residues serine 3335 and serine 3339 each carry the phosphoserine modification. The short motif at 3346–3349 (FIFV) is the LC3-interacting region (LIR) element. A WD 5 repeat occupies 3408–3447 (AHPAEVTALGISKDHSRILVGDSRGRVFSWSVSDQPGRSA). The segment at 3454–3514 (DEGGDSCSGC…VCQNCYYNLQ (61 aa)) adopts an FYVE-type zinc-finger fold. 8 residues coordinate Zn(2+): cysteine 3460, cysteine 3463, cysteine 3476, cysteine 3479, cysteine 3484, cysteine 3487, cysteine 3506, and cysteine 3509.

In terms of assembly, directly interacts with ATG5 and associates with the ATG12-ATG5-ATG16L complex. Interacts with p62/SQSTM1; this interaction is required to recruit WDFY3 to cytoplasmic bodies and to PML bodies. Directly interacts with GABARAP, GABARAPL1 and GABARAPL2; the interaction with GABARAP is required for WDFY3 recruitment to MAP1LC3B-positive p62/SQSTM1 bodies. Weakly interacts with MAP1LC3C; this interaction is direct. Does not interact with MAP1LC3A, nor MAP1LC3B. Interacts with TRAF6. Expressed in osteoclast and their mononuclear precursors (at protein level).

Its subcellular location is the nucleus membrane. It localises to the cytoplasm. It is found in the cytosol. The protein localises to the nucleus. The protein resides in the PML body. Its subcellular location is the membrane. It localises to the perikaryon. It is found in the cell projection. The protein localises to the axon. Functionally, required for selective macroautophagy (aggrephagy). Acts as an adapter protein by linking specific proteins destined for degradation to the core autophagic machinery members, such as the ATG5-ATG12-ATG16L E3-like ligase, SQSTM1 and LC3. Along with p62/SQSTM1, involved in the formation and autophagic degradation of cytoplasmic ubiquitin-containing inclusions (p62 bodies, ALIS/aggresome-like induced structures). Along with SQSTM1, required to recruit ubiquitinated proteins to PML bodies in the nucleus. Important for normal brain development. Essential for the formation of axonal tracts throughout the brain and spinal cord, including the formation of the major forebrain commissures. Involved in the ability of neural cells to respond to guidance cues. Required for cortical neurons to respond to the trophic effects of netrin-1/NTN1. Regulates Wnt signaling through the removal of DVL3 aggregates, likely in an autophagy-dependent manner. This process may be important for the determination of brain size during embryonic development. May regulate osteoclastogenesis by acting on the TNFSF11/RANKL - TRAF6 pathway. After cytokinetic abscission, involved in midbody remnant degradation. In vitro strongly binds to phosphatidylinositol 3-phosphate (PtdIns3P). The chain is WD repeat and FYVE domain-containing protein 3 (WDFY3) from Homo sapiens (Human).